The chain runs to 364 residues: Pectinesterase (364 aa).

A signal peptide spans 1-22 (MSCIAVEAVLLGILLYIPIVLS). N103 carries N-linked (GlcNAc...) asparagine glycosylation. The active site involves D220.

It localises to the secreted. The enzyme catalyses [(1-&gt;4)-alpha-D-galacturonosyl methyl ester](n) + n H2O = [(1-&gt;4)-alpha-D-galacturonosyl](n) + n methanol + n H(+). It participates in glycan metabolism; pectin degradation; 2-dehydro-3-deoxy-D-gluconate from pectin: step 1/5. Functionally, catalyzes the demethylesterification of homogalacturonan components of pectin. This chain is Pectinesterase, found in Parthenium hysterophorus (Santa Maria feverfew).